Consider the following 526-residue polypeptide: tRNA-2-methylthio-N(6)-dimethylallyladenosine synthase (526 aa).

The tract at residues 1-24 (MTQQLNHAKVNQHPGQATLPETAE) is disordered. Positions 28–144 (RTYEVKTYGC…LPTLLQRAEH (117 aa)) constitute an MTTase N-terminal domain. Positions 37, 73, 107, 181, 185, and 188 each coordinate [4Fe-4S] cluster. Positions 167-403 (RESAYAGWVS…MVVQEQVCEE (237 aa)) constitute a Radical SAM core domain. The TRAM domain occupies 406 to 477 (QKLIGTTVEL…PFFLIADSGV (72 aa)).

The protein belongs to the methylthiotransferase family. MiaB subfamily. Monomer. It depends on [4Fe-4S] cluster as a cofactor.

The protein localises to the cytoplasm. The catalysed reaction is N(6)-dimethylallyladenosine(37) in tRNA + (sulfur carrier)-SH + AH2 + 2 S-adenosyl-L-methionine = 2-methylsulfanyl-N(6)-dimethylallyladenosine(37) in tRNA + (sulfur carrier)-H + 5'-deoxyadenosine + L-methionine + A + S-adenosyl-L-homocysteine + 2 H(+). Catalyzes the methylthiolation of N6-(dimethylallyl)adenosine (i(6)A), leading to the formation of 2-methylthio-N6-(dimethylallyl)adenosine (ms(2)i(6)A) at position 37 in tRNAs that read codons beginning with uridine. This Corynebacterium glutamicum (strain R) protein is tRNA-2-methylthio-N(6)-dimethylallyladenosine synthase.